The primary structure comprises 159 residues: Regulatory protein RecX (159 aa).

The protein belongs to the RecX family.

The protein resides in the cytoplasm. Functionally, modulates RecA activity. This Ralstonia pickettii (strain 12J) protein is Regulatory protein RecX.